A 372-amino-acid chain; its full sequence is tRNA-specific 2-thiouridylase MnmA (372 aa).

Residues Ala6–Ser13 and Leu32 each bind ATP. The active-site Nucleophile is Cys101. A disulfide bridge links Cys101 with Cys193. ATP is bound at residue Gly125. Residues Lys143–Gln145 are interaction with tRNA. Cys193 functions as the Cysteine persulfide intermediate in the catalytic mechanism.

It belongs to the MnmA/TRMU family.

The protein resides in the cytoplasm. It catalyses the reaction S-sulfanyl-L-cysteinyl-[protein] + uridine(34) in tRNA + AH2 + ATP = 2-thiouridine(34) in tRNA + L-cysteinyl-[protein] + A + AMP + diphosphate + H(+). Its function is as follows. Catalyzes the 2-thiolation of uridine at the wobble position (U34) of tRNA, leading to the formation of s(2)U34. The sequence is that of tRNA-specific 2-thiouridylase MnmA from Corynebacterium kroppenstedtii (strain DSM 44385 / JCM 11950 / CIP 105744 / CCUG 35717).